A 263-amino-acid chain; its full sequence is Phosphonates import ATP-binding protein PhnC 1 (263 aa).

One can recognise an ABC transporter domain in the interval I3–K248. G37–S44 provides a ligand contact to ATP.

The protein belongs to the ABC transporter superfamily. Phosphonates importer (TC 3.A.1.9.1) family. In terms of assembly, the complex is composed of two ATP-binding proteins (PhnC), two transmembrane proteins (PhnE) and a solute-binding protein (PhnD).

The protein resides in the cell inner membrane. It catalyses the reaction phosphonate(out) + ATP + H2O = phosphonate(in) + ADP + phosphate + H(+). In terms of biological role, part of the ABC transporter complex PhnCDE involved in phosphonates import. Responsible for energy coupling to the transport system. In Synechococcus sp. (strain JA-2-3B'a(2-13)) (Cyanobacteria bacterium Yellowstone B-Prime), this protein is Phosphonates import ATP-binding protein PhnC 1.